The primary structure comprises 476 residues: Bifunctional protein HldE (476 aa).

The tract at residues 1–318 (MAQYSAEFKQ…ENAIHARPET (318 aa)) is ribokinase. ATP is bound at residue 195–198 (NMSE). D264 is an active-site residue. A cytidylyltransferase region spans residues 344 to 476 (MTNGCFDILH…VIEKIKLLKD (133 aa)).

In the N-terminal section; belongs to the carbohydrate kinase PfkB family. This sequence in the C-terminal section; belongs to the cytidylyltransferase family. As to quaternary structure, homodimer.

The catalysed reaction is D-glycero-beta-D-manno-heptose 7-phosphate + ATP = D-glycero-beta-D-manno-heptose 1,7-bisphosphate + ADP + H(+). It catalyses the reaction D-glycero-beta-D-manno-heptose 1-phosphate + ATP + H(+) = ADP-D-glycero-beta-D-manno-heptose + diphosphate. It participates in nucleotide-sugar biosynthesis; ADP-L-glycero-beta-D-manno-heptose biosynthesis; ADP-L-glycero-beta-D-manno-heptose from D-glycero-beta-D-manno-heptose 7-phosphate: step 1/4. The protein operates within nucleotide-sugar biosynthesis; ADP-L-glycero-beta-D-manno-heptose biosynthesis; ADP-L-glycero-beta-D-manno-heptose from D-glycero-beta-D-manno-heptose 7-phosphate: step 3/4. Its function is as follows. Catalyzes the phosphorylation of D-glycero-D-manno-heptose 7-phosphate at the C-1 position to selectively form D-glycero-beta-D-manno-heptose-1,7-bisphosphate. Functionally, catalyzes the ADP transfer from ATP to D-glycero-beta-D-manno-heptose 1-phosphate, yielding ADP-D-glycero-beta-D-manno-heptose. The chain is Bifunctional protein HldE from Haemophilus influenzae (strain PittGG).